The sequence spans 463 residues: A-type ATP synthase subunit B (463 aa).

The protein belongs to the ATPase alpha/beta chains family. In terms of assembly, has multiple subunits with at least A(3), B(3), C, D, E, F, H, I and proteolipid K(x).

It is found in the cell membrane. Component of the A-type ATP synthase that produces ATP from ADP in the presence of a proton gradient across the membrane. The B chain is a regulatory subunit. The polypeptide is A-type ATP synthase subunit B (Saccharolobus islandicus (strain Y.N.15.51 / Yellowstone #2) (Sulfolobus islandicus)).